Reading from the N-terminus, the 206-residue chain is Ribosomal RNA small subunit methyltransferase G (206 aa).

Residues Gly-73, Leu-78, 124–125 (VE), and Arg-139 each bind S-adenosyl-L-methionine.

Belongs to the methyltransferase superfamily. RNA methyltransferase RsmG family.

The protein localises to the cytoplasm. It carries out the reaction guanosine(527) in 16S rRNA + S-adenosyl-L-methionine = N(7)-methylguanosine(527) in 16S rRNA + S-adenosyl-L-homocysteine. Specifically methylates the N7 position of guanine in position 527 of 16S rRNA. The sequence is that of Ribosomal RNA small subunit methyltransferase G from Edwardsiella ictaluri (strain 93-146).